Reading from the N-terminus, the 91-residue chain is MHCLRAIVKGKVQGVYFRDFTRTQATRLGLCGYAKNLANGAEVEVVAEGDKDALLEFLDLLRSGPPRAEVKDVETSWETATANYSDFRIKH.

In terms of domain architecture, Acylphosphatase-like spans 3–91; it reads CLRAIVKGKV…ANYSDFRIKH (89 aa). Active-site residues include arginine 18 and asparagine 36.

The protein belongs to the acylphosphatase family.

The enzyme catalyses an acyl phosphate + H2O = a carboxylate + phosphate + H(+). The polypeptide is Acylphosphatase (acyP) (Dehalococcoides mccartyi (strain CBDB1)).